The following is a 611-amino-acid chain: Depudecin biosynthesis cluster-specific transcription activator DEP6 (611 aa).

Residues 17–44 constitute a DNA-binding region (zn(2)-C6 fungal-type); that stretch reads CEICRQRKVRCDRALPRCRRCERLNQAC. The interval 76–125 is disordered; the sequence is DAPRGPASSMSSQSRSDSAAPAASRVPSVSASVPNSAATNPMDMVGTRSS. Residues 78–113 show a composition bias toward low complexity; sequence PRGPASSMSSQSRSDSAAPAASRVPSVSASVPNSAA.

The protein localises to the nucleus. Transcription factor that positively regulates the expression of the gene cluster that mediates the biosynthesis of depudecin, a highly oxidized eleven-carbon linear polyketide that acts as a histone deacetylase (HDAC) inhibitor and makes a small contribution to pathogenesis. The sequence is that of Depudecin biosynthesis cluster-specific transcription activator DEP6 from Fusarium langsethiae.